Here is a 428-residue protein sequence, read N- to C-terminus: Adenylosuccinate synthetase (428 aa).

GTP contacts are provided by residues 12–18 (GDEGKGK) and 40–42 (GHT). The active-site Proton acceptor is the Asp13. Asp13 and Gly40 together coordinate Mg(2+). IMP-binding positions include 13-16 (DEGK), 38-41 (NAGH), Thr128, Arg142, Gln223, Thr238, and Arg302. The active-site Proton donor is His41. Residue 298-304 (TTTGRPR) participates in substrate binding. Residues Arg304, 330-332 (SID), and 412-414 (SVG) each bind GTP.

This sequence belongs to the adenylosuccinate synthetase family. As to quaternary structure, homodimer. Requires Mg(2+) as cofactor.

It is found in the cytoplasm. It carries out the reaction IMP + L-aspartate + GTP = N(6)-(1,2-dicarboxyethyl)-AMP + GDP + phosphate + 2 H(+). It functions in the pathway purine metabolism; AMP biosynthesis via de novo pathway; AMP from IMP: step 1/2. Functionally, plays an important role in the de novo pathway of purine nucleotide biosynthesis. Catalyzes the first committed step in the biosynthesis of AMP from IMP. This Streptococcus pneumoniae serotype 2 (strain D39 / NCTC 7466) protein is Adenylosuccinate synthetase.